The chain runs to 92 residues: Small ribosomal subunit protein uS19c (92 aa).

This sequence belongs to the universal ribosomal protein uS19 family.

It is found in the plastid. The protein localises to the chloroplast. Its function is as follows. Protein S19 forms a complex with S13 that binds strongly to the 16S ribosomal RNA. In Adiantum capillus-veneris (Maidenhair fern), this protein is Small ribosomal subunit protein uS19c.